Consider the following 121-residue polypeptide: UPF0102 protein AAur_2443 (121 aa).

This sequence belongs to the UPF0102 family.

This is UPF0102 protein AAur_2443 from Paenarthrobacter aurescens (strain TC1).